A 461-amino-acid chain; its full sequence is MMLLYYTLSFILLPVYFIIIFIRLLIGKEDIRRIQERFAIGKQRQNSALDFIQMSVNKEGFTDHKTTSYVDMHRNASLMYKLSLERSYAHSLVWIHAASVGEVMTALTLIHNISKLAPNVRFLITSWTNASAKILSTKLPKIATHQFLPIDNVIFTRKFLRNWQPDLGIFIESELWPCTINEGAKYCKLLLINARISNKSFKAWLKRKRFFQLIIKNFSKIIVQSERDLQKFNALGISDAMNLGNIKFANEKLLVNQEKLSKLILHLDNRRVLVFASTHPEDEEVILPIINNLKEQFIDCYIILIPRHPERIKSIINNCKLHHLSATAKSQNDLPVLNNDLYIVDRFGEMGLFFSVATISFIGGSFKQGGHNILEAAYFSNCIIFGPDMSKNTDIAKGILQNNAAIQIKNGKDLLNTLTSLLNANNALKLKTYRENALKFVENNQKKILDEYLQIIKQFLP.

A helical; Signal-anchor transmembrane segment spans residues 2-22; the sequence is MLLYYTLSFILLPVYFIIIFI. Residues 47-88 form the RPE1 insert domain; the sequence is SALDFIQMSVNKEGFTDHKTTSYVDMHRNASLMYKLSLERSY. Glutamate 102 serves as the catalytic Proton acceptor. CMP is bound by residues 306-307, 347-349, and 372-375; these read PR, FGE, and NILE.

Belongs to the glycosyltransferase group 1 family. Glycosyltransferase 30 subfamily.

It is found in the cell inner membrane. The catalysed reaction is lipid IVA (E. coli) + CMP-3-deoxy-beta-D-manno-octulosonate = alpha-Kdo-(2-&gt;6)-lipid IVA (E. coli) + CMP + H(+). It functions in the pathway bacterial outer membrane biogenesis; LPS core biosynthesis. Involved in lipopolysaccharide (LPS) biosynthesis. Catalyzes the transfer of 3-deoxy-D-manno-octulosonate (Kdo) residue(s) from CMP-Kdo to lipid IV(A), the tetraacyldisaccharide-1,4'-bisphosphate precursor of lipid A. This chain is 3-deoxy-D-manno-octulosonic acid transferase (waaA), found in Rickettsia prowazekii (strain Madrid E).